A 462-amino-acid polypeptide reads, in one-letter code: Adenosylhomocysteinase (462 aa).

Residues Thr-55, Asp-128, and Glu-188 each coordinate substrate. An NAD(+)-binding site is contributed by 189-191; sequence TTT. 2 residues coordinate substrate: Lys-218 and Asp-222. Residues Asn-223, 252-257, Glu-275, Asn-310, 331-333, and Asn-376 each bind NAD(+); these read GYGDVG and IGH.

It belongs to the adenosylhomocysteinase family. The cofactor is NAD(+).

The protein resides in the cytoplasm. The catalysed reaction is S-adenosyl-L-homocysteine + H2O = L-homocysteine + adenosine. The protein operates within amino-acid biosynthesis; L-homocysteine biosynthesis; L-homocysteine from S-adenosyl-L-homocysteine: step 1/1. Its function is as follows. May play a key role in the regulation of the intracellular concentration of adenosylhomocysteine. This is Adenosylhomocysteinase from Roseobacter denitrificans (strain ATCC 33942 / OCh 114) (Erythrobacter sp. (strain OCh 114)).